A 309-amino-acid polypeptide reads, in one-letter code: Olfactory receptor 5H2 (309 aa).

The Extracellular segment spans residues M1–F28. Residue N5 is glycosylated (N-linked (GlcNAc...) asparagine). Residues L29–I49 form a helical membrane-spanning segment. The Cytoplasmic segment spans residues W50–H56. The chain crosses the membrane as a helical span at residues I57–V77. Residues T78–C97 lie on the Extracellular side of the membrane. C97 and C179 are disulfide-bonded. Residues M98–M118 form a helical membrane-spanning segment. Topologically, residues A119–R143 are cytoplasmic. Residues L144–F164 form a helical membrane-spanning segment. The Extracellular segment spans residues R165–S193. Residues I194–V214 traverse the membrane as a helical segment. Residues L215–S239 are Cytoplasmic-facing. Residues T240–L260 form a helical membrane-spanning segment. Residues R261–D271 lie on the Extracellular side of the membrane. The chain crosses the membrane as a helical span at residues M272–L292. The Cytoplasmic portion of the chain corresponds to R293 to V309.

It belongs to the G-protein coupled receptor 1 family.

The protein localises to the cell membrane. Odorant receptor. This Homo sapiens (Human) protein is Olfactory receptor 5H2 (OR5H2).